Consider the following 325-residue polypeptide: GMP reductase (325 aa).

Residue cysteine 174 is the Thioimidate intermediate of the active site. Residue 203 to 226 (LIADGGIRTHGDIAKSIRFGASMV) coordinates NADP(+).

It belongs to the IMPDH/GMPR family. GuaC type 2 subfamily.

The enzyme catalyses IMP + NH4(+) + NADP(+) = GMP + NADPH + 2 H(+). Functionally, catalyzes the irreversible NADPH-dependent deamination of GMP to IMP. It functions in the conversion of nucleobase, nucleoside and nucleotide derivatives of G to A nucleotides, and in maintaining the intracellular balance of A and G nucleotides. The polypeptide is GMP reductase (Staphylococcus aureus (strain bovine RF122 / ET3-1)).